A 115-amino-acid chain; its full sequence is MAAPSLESNWLVQIPNQSGSHVAQARKDSFAEHMSYNKTHIEAGRMVLAGPLVEALPQDGQPPVITGSIMVWKATAGEREMLDKWLSDNPFATSGVWDLTKMECTPFLCGVRKGL.

Its function is as follows. Part of the gene cluster that mediates the biosynthesis of xenovulene A, an unusual meroterpenoid that has potent inhibitory effects on the human gamma-aminobutyrate A (GABAA) benzodiazepine receptor. The first step of xenovulene A biosynthesis is the biosynthesis of 3-methylorcinaldehyde performed by the non-reducing polyketide synthase aspks1. The salicylate hydroxylase asL1 then catalyzes the oxidative dearomatization of 3-methylorcinaldehyde to yield a dearomatized hydroxycyclohexadione. The 2-oxoglutarate-dependent dioxygenase asL3 further catalyzes the oxidative ring expansion to provide the first tropolone metabolite. The cytochrome P450 monooxygenase asR2 allows the synthesis of tropolone hemiacetal. In parallel, a previously unrecognised class of terpene cyclase, asR6, produces alpha-humulene from farnesylpyrophosphate (FPP). The putative Diels-Alderase asR5 probably catalyzes the formation of the tropolone-humulene skeleton by linking humulene and the polyketide moiety. Oxidative-ring contractions catalyzed by asL4 and asL6 then processively remove carbon atoms from the polyketide to yield xenovulene A. The protein is Xenovulene A biosynthesis cluster protein asL2 of Sarocladium schorii (Acremonium strictum (strain IMI 501407)).